Consider the following 536-residue polypeptide: Glycine-rich extracellular protein 1 (536 aa).

The N-terminal stretch at 1-22 (MGAWAFPAALFLLCLTSESLQG) is a signal peptide. Disordered stretches follow at residues 111–134 (AQNGFGPGFGGGGKPQKPGPTTQN), 306–336 (GAGEGMKPQKPGLRGTLKPQKSGHGHENGPW), and 500–536 (GDEYAEARSQPGGPDVKRGSNGQLGNGYGGRCPLGKC). Residues 115 to 124 (FGPGFGGGGK) show a composition bias toward gly residues. Residues 521-536 (GQLGNGYGGRCPLGKC) show a composition bias toward gly residues.

This is Glycine-rich extracellular protein 1 from Homo sapiens (Human).